A 369-amino-acid polypeptide reads, in one-letter code: Protein V (369 aa).

Disordered regions lie at residues 1 to 24 (MDQD…GRES) and 38 to 320 (SEPT…GHRR). Over residues 7–20 (ISKEDSEVEREASG) the composition is skewed to basic and acidic residues. Positions 50–61 (LHNTINTLQRPG) are enriched in polar residues. Composition is skewed to basic and acidic residues over residues 99–110 (AEAHARNVDKQN) and 150–168 (GAED…RGED). 3 positions are modified to phosphoserine; by host: serine 249, serine 257, and serine 260. Histidine 318, cysteine 337, cysteine 341, cysteine 353, cysteine 355, cysteine 358, cysteine 362, and cysteine 365 together coordinate Zn(2+).

Belongs to the paramyxoviruses V protein family. Interacts with host IFIH1/MDA5 and DHX58/LGP2. Interacts with host IRF3. Interacts with host RIGI regulatory protein (via CARDs domain) and host TRIM25 (via SPRY domain); these interactions prevent TRIM25-mediated ubiquitination of RIG-I and disrupts downstream RIG-I signaling.

It localises to the host cytoplasm. Plays an essential role in the inhibition of host immune response. Prevents the establishment of cellular antiviral state by blocking interferon-alpha/beta (IFN-alpha/beta) production and signaling pathway. Interacts with host IFIH1/MDA5 and DHX58/LGP2 to inhibit the transduction pathway involved in the activation of IFN-beta promoter, thus protecting the virus against cell antiviral state. Also interacts with and inhibits host IRF3. Blocks the type I interferon signaling pathway by disrupting the RIG-I signaling pathway. The protein is Protein V (P/V/C) of Sendai virus (strain Hamamatsu) (SeV).